Reading from the N-terminus, the 294-residue chain is 33 kDa chaperonin (294 aa).

2 cysteine pairs are disulfide-bonded: Cys-239-Cys-241 and Cys-272-Cys-275.

The protein belongs to the HSP33 family. Post-translationally, under oxidizing conditions two disulfide bonds are formed involving the reactive cysteines. Under reducing conditions zinc is bound to the reactive cysteines and the protein is inactive.

Its subcellular location is the cytoplasm. Functionally, redox regulated molecular chaperone. Protects both thermally unfolding and oxidatively damaged proteins from irreversible aggregation. Plays an important role in the bacterial defense system toward oxidative stress. The protein is 33 kDa chaperonin of Lacticaseibacillus paracasei (strain ATCC 334 / BCRC 17002 / CCUG 31169 / CIP 107868 / KCTC 3260 / NRRL B-441) (Lactobacillus paracasei).